A 692-amino-acid chain; its full sequence is Elongation factor G (692 aa).

In terms of domain architecture, tr-type G spans 8–282; that stretch reads ENTRNIGIMA…AVIDYLPSPL (275 aa). Residues 17–24, 81–85, and 135–138 each bind GTP; these read AHIDAGKT, DTPGH, and NKMD.

It belongs to the TRAFAC class translation factor GTPase superfamily. Classic translation factor GTPase family. EF-G/EF-2 subfamily.

The protein resides in the cytoplasm. In terms of biological role, catalyzes the GTP-dependent ribosomal translocation step during translation elongation. During this step, the ribosome changes from the pre-translocational (PRE) to the post-translocational (POST) state as the newly formed A-site-bound peptidyl-tRNA and P-site-bound deacylated tRNA move to the P and E sites, respectively. Catalyzes the coordinated movement of the two tRNA molecules, the mRNA and conformational changes in the ribosome. This Bacillus cereus (strain Q1) protein is Elongation factor G.